The chain runs to 354 residues: Methylthioribose-1-phosphate isomerase (354 aa).

Substrate is bound by residues 58–60, Arg-101, and Gln-204; that span reads RGA. Asp-245 functions as the Proton donor in the catalytic mechanism. 255–256 contributes to the substrate binding site; the sequence is NK.

The protein belongs to the eIF-2B alpha/beta/delta subunits family. MtnA subfamily.

It catalyses the reaction 5-(methylsulfanyl)-alpha-D-ribose 1-phosphate = 5-(methylsulfanyl)-D-ribulose 1-phosphate. The protein operates within amino-acid biosynthesis; L-methionine biosynthesis via salvage pathway; L-methionine from S-methyl-5-thio-alpha-D-ribose 1-phosphate: step 1/6. Its function is as follows. Catalyzes the interconversion of methylthioribose-1-phosphate (MTR-1-P) into methylthioribulose-1-phosphate (MTRu-1-P). This is Methylthioribose-1-phosphate isomerase from Xanthomonas oryzae pv. oryzae (strain MAFF 311018).